A 187-amino-acid polypeptide reads, in one-letter code: MKGLYQAAGRTLVTLGGLSIFSGAIAFFPVFSCKLWYTGWSVWIACPIWNGALAVTAGSLVLLAHREWTQRHLWEAVFTFVILSILGCPLHFTVALQSALLGPYCFYSFSGVAGTNYLGYVVTFPFPYTKFPSVCVDPLHYEEYHLTLQVLDLCLSLILFCVSLAVFIKLSARLMQTGYINGPENPQ.

A run of 5 helical transmembrane segments spans residues 11 to 31, 42 to 62, 76 to 96, 106 to 126, and 148 to 168; these read TLVT…FPVF, VWIA…SLVL, AVFT…TVAL, FYSF…TFPF, and LQVL…AVFI.

Its subcellular location is the membrane. The chain is Transmembrane protein 212 (Tmem212) from Mus musculus (Mouse).